The sequence spans 389 residues: Large envelope protein (389 aa).

Residue methionine 1 is modified to N-acetylmethionine. Glycine 2 carries the N-myristoyl glycine; by host lipid modification. Residues 2–108 are pre-S1; sequence GQNLSTSNPL…PPLRNTHPQA (107 aa). Positions 2–163 are pre-S; sequence GQNLSTSNPL…FSRIGDPALN (162 aa). The Virion surface; in external conformation portion of the chain corresponds to 2 to 170; that stretch reads GQNLSTSNPL…ALNMENITSG (169 aa). Residues 2 to 242 lie on the Intravirion; in internal conformation side of the membrane; that stretch reads GQNLSTSNPL…PGYRWMCLRR (241 aa). The segment at 76 to 103 is disordered; sequence TLPANPPPASTNRQSGRQPTPLSPPLRN. A compositionally biased stretch (polar residues) spans 85–95; that stretch reads STNRQSGRQPT. The pre-S2 stretch occupies residues 109-163; the sequence is MQWNSTTFHQTLQDPRVRGLYLPAGGSSSGTVNPVPTTVSPISSIFSRIGDPALN. The chain crosses the membrane as a helical span at residues 171–191; the sequence is FLGPLLVLQAGFFLLTKILTI. Over 192-242 the chain is Intravirion; in external conformation; it reads PKSLDSWWTSLNFLGGTTVCLGQNSQSPTSNHSPTSCPPTCPGYRWMCLRR. Residues 243–263 traverse the membrane as a helical segment; that stretch reads FIIFLFILLLCLIFLLVLLDY. Over 264-337 the chain is Virion surface; that stretch reads QGMLPVCPLI…WASARFSWLS (74 aa). N-linked (GlcNAc...) asparagine; by host glycosylation occurs at asparagine 309. A helical transmembrane segment spans residues 338–358; that stretch reads LLVPFVQWFVGLSPTVWLLVI. Over 359 to 364 the chain is Intravirion; sequence WMMWYW. Residues 365–387 form a helical membrane-spanning segment; sequence GPKLFTILSPFLPLLPIFFCLWV. The Virion surface segment spans residues 388 to 389; sequence YI.

It belongs to the orthohepadnavirus major surface antigen family. In terms of assembly, in its internal form (Li-HBsAg), interacts with the capsid protein and with the isoform S. Interacts with host chaperone CANX. Associates with host chaperone CANX through its pre-S2 N glycan; this association may be essential for isoform M proper secretion. As to quaternary structure, interacts with isoform L. Interacts with the antigens of satellite virus HDV (HDVAgs); this interaction is required for encapsidation of HDV genomic RNA. Post-translationally, isoform M is N-terminally acetylated by host at a ratio of 90%, and N-glycosylated by host at the pre-S2 region. Myristoylated.

The protein localises to the virion membrane. Its function is as follows. The large envelope protein exists in two topological conformations, one which is termed 'external' or Le-HBsAg and the other 'internal' or Li-HBsAg. In its external conformation the protein attaches the virus to cell receptors and thereby initiating infection. This interaction determines the species specificity and liver tropism. This attachment induces virion internalization predominantly through caveolin-mediated endocytosis. The large envelope protein also assures fusion between virion membrane and endosomal membrane. In its internal conformation the protein plays a role in virion morphogenesis and mediates the contact with the nucleocapsid like a matrix protein. In terms of biological role, the middle envelope protein plays an important role in the budding of the virion. It is involved in the induction of budding in a nucleocapsid independent way. In this process the majority of envelope proteins bud to form subviral lipoprotein particles of 22 nm of diameter that do not contain a nucleocapsid. This Homo sapiens (Human) protein is Large envelope protein.